Consider the following 243-residue polypeptide: 1-(5-phosphoribosyl)-5-[(5-phosphoribosylamino)methylideneamino] imidazole-4-carboxamide isomerase (243 aa).

Asp10 acts as the Proton acceptor in catalysis. Asp129 functions as the Proton donor in the catalytic mechanism.

This sequence belongs to the HisA/HisF family.

The protein resides in the cytoplasm. It catalyses the reaction 1-(5-phospho-beta-D-ribosyl)-5-[(5-phospho-beta-D-ribosylamino)methylideneamino]imidazole-4-carboxamide = 5-[(5-phospho-1-deoxy-D-ribulos-1-ylimino)methylamino]-1-(5-phospho-beta-D-ribosyl)imidazole-4-carboxamide. Its pathway is amino-acid biosynthesis; L-histidine biosynthesis; L-histidine from 5-phospho-alpha-D-ribose 1-diphosphate: step 4/9. This Saccharopolyspora erythraea (strain ATCC 11635 / DSM 40517 / JCM 4748 / NBRC 13426 / NCIMB 8594 / NRRL 2338) protein is 1-(5-phosphoribosyl)-5-[(5-phosphoribosylamino)methylideneamino] imidazole-4-carboxamide isomerase.